Consider the following 108-residue polypeptide: Putative pterin-4-alpha-carbinolamine dehydratase (108 aa).

This sequence belongs to the pterin-4-alpha-carbinolamine dehydratase family.

It catalyses the reaction (4aS,6R)-4a-hydroxy-L-erythro-5,6,7,8-tetrahydrobiopterin = (6R)-L-erythro-6,7-dihydrobiopterin + H2O. The polypeptide is Putative pterin-4-alpha-carbinolamine dehydratase (Bordetella avium (strain 197N)).